We begin with the raw amino-acid sequence, 206 residues long: Cytochrome c oxidase subunit 3 (206 aa).

5 consecutive transmembrane segments (helical) span residues 26–46 (FLGF…FFGT), 68–88 (LVFI…LAMF), 97–117 (AMMI…GFEI), 143–163 (LVGL…VLLI), and 185–205 (WHFI…MGVG).

This sequence belongs to the cytochrome c oxidase subunit 3 family.

Its subcellular location is the cell membrane. It carries out the reaction 4 Fe(II)-[cytochrome c] + O2 + 8 H(+)(in) = 4 Fe(III)-[cytochrome c] + 2 H2O + 4 H(+)(out). The chain is Cytochrome c oxidase subunit 3 (ctaE) from Alkalihalophilus pseudofirmus (strain ATCC BAA-2126 / JCM 17055 / OF4) (Bacillus pseudofirmus).